Reading from the N-terminus, the 286-residue chain is Protein METABOLIC NETWORK MODULATOR 1 (286 aa).

The span at 1–10 (MEKESHEENN) shows a compositional bias: basic and acidic residues. Disordered regions lie at residues 1–60 (MEKE…DDEA), 123–146 (VMHHDGSAKRGRKSRFREKRGSGV), and 181–204 (GGERVPIDHSPMQTETGSQASGAS). A compositionally biased stretch (basic residues) spans 20–29 (KRKRGRPRKQ). Residues 30–39 (LKLESNEHSL) show a composition bias toward basic and acidic residues. Over residues 131–140 (KRGRKSRFRE) the composition is skewed to basic residues. The span at 191-204 (PMQTETGSQASGAS) shows a compositional bias: polar residues.

In terms of tissue distribution, mailny observed in young seedlings and in emerging leaves.

In terms of biological role, lineage-specific modulator of primary metabolism. Influences flowering time. This Arabidopsis thaliana (Mouse-ear cress) protein is Protein METABOLIC NETWORK MODULATOR 1.